We begin with the raw amino-acid sequence, 1450 residues long: Sister chromatid cohesion protein PDS5 homolog (1450 aa).

Disordered regions lie at residues 1–145 (MATR…KETK), 680–707 (VGGSTTPTSKKSQPPQQQQQQQQQQQQQ), and 1340–1450 (LPPL…EVEN). Positions 45–59 (DDGELDSDIDEEDES) are enriched in acidic residues. Positions 77–138 (KTQQQPQKSI…TSSSSQQSTQ (62 aa)) are enriched in low complexity. The stretch at 650 to 716 (KQLFKKYLEE…QLQQPENDIE (67 aa)) forms a coiled coil. Positions 682–691 (GSTTPTSKKS) are enriched in polar residues. Composition is skewed to low complexity over residues 692–707 (QPPQQQQQQQQQQQQQ) and 1350–1363 (NNNNNNNNTNSTNN). The segment covering 1369–1378 (DENNNNKNDN) has biased composition (basic and acidic residues). Over residues 1387 to 1401 (NSTTAVPQKSIISKP) the composition is skewed to low complexity. Over residues 1402 to 1427 (PAKKVSKKAAAKQKSPKKKTNKKKKQ) the composition is skewed to basic residues. The span at 1430 to 1450 (SEEEVSSSEEEDESQDEEVEN) shows a compositional bias: acidic residues.

The protein belongs to the PDS5 family.

It is found in the nucleus. Functionally, may regulate sister chromatid cohesion during mitosis and couple it to DNA replication. This chain is Sister chromatid cohesion protein PDS5 homolog, found in Dictyostelium discoideum (Social amoeba).